A 329-amino-acid polypeptide reads, in one-letter code: Glycerol-3-phosphate dehydrogenase [NAD(P)+] (329 aa).

Residues serine 10, tryptophan 11, arginine 31, and lysine 105 each contribute to the NADPH site. Sn-glycerol 3-phosphate is bound by residues lysine 105, glycine 134, and serine 136. Alanine 138 is a binding site for NADPH. Sn-glycerol 3-phosphate contacts are provided by lysine 189, aspartate 242, serine 252, arginine 253, and asparagine 254. Lysine 189 acts as the Proton acceptor in catalysis. Arginine 253 provides a ligand contact to NADPH. NADPH is bound by residues valine 277 and glutamate 279.

It belongs to the NAD-dependent glycerol-3-phosphate dehydrogenase family.

It is found in the cytoplasm. The catalysed reaction is sn-glycerol 3-phosphate + NAD(+) = dihydroxyacetone phosphate + NADH + H(+). The enzyme catalyses sn-glycerol 3-phosphate + NADP(+) = dihydroxyacetone phosphate + NADPH + H(+). Its pathway is membrane lipid metabolism; glycerophospholipid metabolism. Functionally, catalyzes the reduction of the glycolytic intermediate dihydroxyacetone phosphate (DHAP) to sn-glycerol 3-phosphate (G3P), the key precursor for phospholipid synthesis. This is Glycerol-3-phosphate dehydrogenase [NAD(P)+] from Neisseria meningitidis serogroup C (strain 053442).